Consider the following 548-residue polypeptide: Medium/long-chain-fatty-acid--CoA/3-oxocholest-4-en-26-oate--CoA ligase (548 aa).

Residues 174 to 182 (TGGTTGFPK), Asp415, Arg430, and Lys521 contribute to the ATP site. Basic and acidic residues predominate over residues 520 to 541 (GKPDYRWAKEQTEARPADDVHA). The tract at residues 520-548 (GKPDYRWAKEQTEARPADDVHAGHVTSGG) is disordered.

It belongs to the ATP-dependent AMP-binding enzyme family.

The enzyme catalyses a medium-chain fatty acid + ATP + CoA = a medium-chain fatty acyl-CoA + AMP + diphosphate. The catalysed reaction is a long-chain fatty acid + ATP + CoA = a long-chain fatty acyl-CoA + AMP + diphosphate. It carries out the reaction (25S)-3-oxocholest-4-en-26-oate + ATP + CoA = (25S)-3-oxocholest-4-en-26-oyl-CoA + AMP + diphosphate. The protein operates within lipid metabolism; fatty acid biosynthesis. It functions in the pathway steroid metabolism; cholesterol metabolism. In terms of biological role, catalyzes the activation of medium/long-chain fatty acids as acyl-coenzyme A (acyl-CoA), which are then transferred to the multifunctional polyketide synthase (PKS) type III for further chain extension. Also involved in the degradation of cholesterol via the degradation of the side chains of C-24 branched-chain sterols. Catalyzes the ATP-dependent CoA thioesterification of the sterol 3-oxocholest-4-en-26-oate to yield 3-oxocholest-4-en-26-oyl-CoA. The polypeptide is Medium/long-chain-fatty-acid--CoA/3-oxocholest-4-en-26-oate--CoA ligase (Mycobacterium bovis (strain ATCC BAA-935 / AF2122/97)).